A 52-amino-acid chain; its full sequence is Sperm protamine P1 (52 aa).

The segment at 1–27 (MARYSCCRSHSRSRSRRRRQRCRRRRR) is disordered. Positions 9–27 (SHSRSRSRRRRQRCRRRRR) are enriched in basic residues.

Belongs to the protamine P1 family. As to expression, testis.

Its subcellular location is the nucleus. It is found in the chromosome. Its function is as follows. Protamines substitute for histones in the chromatin of sperm during the haploid phase of spermatogenesis. They compact sperm DNA into a highly condensed, stable and inactive complex. This is Sperm protamine P1 (PRM1) from Rhinolophus ferrumequinum (Greater horseshoe bat).